We begin with the raw amino-acid sequence, 334 residues long: Putative ankyrin repeat protein RBE_0347 (334 aa).

4 ANK repeats span residues 80–90 (EQGINPNIQDS), 91–120 (SGNTLLLYACQSSLVEVVQFLLKKGANPNI), 124–161 (SDNTPLSKIISNRFIDKTEIYIAKLLLQNGALTELKDF), and 162–191 (VGFTPIQSATQYGHTEIVKSLIQNGADINV).

This chain is Putative ankyrin repeat protein RBE_0347, found in Rickettsia bellii (strain RML369-C).